The sequence spans 298 residues: Ethanolamine ammonia-lyase small subunit (298 aa).

The disordered stretch occupies residues 17–37 (MGQDVPQPVAPSKQEGAKPQC). Adenosylcob(III)alamin is bound by residues valine 210, glutamate 231, and cysteine 261.

It belongs to the EutC family. In terms of assembly, the basic unit is a heterodimer which dimerizes to form tetramers. The heterotetramers trimerize; 6 large subunits form a core ring with 6 small subunits projecting outwards. Requires adenosylcob(III)alamin as cofactor.

It is found in the bacterial microcompartment. The enzyme catalyses ethanolamine = acetaldehyde + NH4(+). It functions in the pathway amine and polyamine degradation; ethanolamine degradation. Catalyzes the deamination of various vicinal amino-alcohols to oxo compounds. Allows this organism to utilize ethanolamine as the sole source of nitrogen and carbon in the presence of external vitamin B12. The chain is Ethanolamine ammonia-lyase small subunit from Salmonella paratyphi A (strain ATCC 9150 / SARB42).